The following is a 504-amino-acid chain: Anaerobic nitric oxide reductase transcription regulator NorR (504 aa).

4-aspartylphosphate is present on Asp-57. One can recognise a Sigma-54 factor interaction domain in the interval 187–416 (MIGLSPGMTQ…LEHAIHRAVV (230 aa)). ATP-binding positions include 215–222 (GETGTGKE) and 278–287 (ADNGTLFLDE). Positions 479–498 (WAACARMLETDVANLHRLAK) form a DNA-binding region, H-T-H motif.

It functions in the pathway nitrogen metabolism; nitric oxide reduction. In terms of biological role, required for the expression of anaerobic nitric oxide (NO) reductase, acts as a transcriptional activator for at least the norVW operon. Activation also requires sigma-54. This chain is Anaerobic nitric oxide reductase transcription regulator NorR, found in Escherichia coli O127:H6 (strain E2348/69 / EPEC).